The primary structure comprises 257 residues: Ditrans,polycis-undecaprenyl-diphosphate synthase ((2E,6E)-farnesyl-diphosphate specific) (257 aa).

Residue Asp34 is part of the active site. A Mg(2+)-binding site is contributed by Asp34. Residues 35–38 (GNGR), Trp39, Arg47, and His51 each bind substrate. Catalysis depends on Asn82, which acts as the Proton acceptor. Substrate is bound by residues Trp83, Arg85, Arg201, and 207-209 (RLS). Glu220 serves as a coordination point for Mg(2+).

This sequence belongs to the UPP synthase family. As to quaternary structure, homodimer. The cofactor is Mg(2+).

It catalyses the reaction 8 isopentenyl diphosphate + (2E,6E)-farnesyl diphosphate = di-trans,octa-cis-undecaprenyl diphosphate + 8 diphosphate. Its function is as follows. Catalyzes the sequential condensation of isopentenyl diphosphate (IPP) with (2E,6E)-farnesyl diphosphate (E,E-FPP) to yield (2Z,6Z,10Z,14Z,18Z,22Z,26Z,30Z,34E,38E)-undecaprenyl diphosphate (di-trans,octa-cis-UPP). UPP is the precursor of glycosyl carrier lipid in the biosynthesis of bacterial cell wall polysaccharide components such as peptidoglycan and lipopolysaccharide. The sequence is that of Ditrans,polycis-undecaprenyl-diphosphate synthase ((2E,6E)-farnesyl-diphosphate specific) from Francisella tularensis subsp. tularensis (strain SCHU S4 / Schu 4).